Here is a 645-residue protein sequence, read N- to C-terminus: UvrABC system protein C (645 aa).

Positions 1–20 (MTDLPPHSSHHPADQGEPLV) are disordered. One can recognise a GIY-YIG domain in the interval 40–118 (YSPGVYRMLS…IKRMKPRFNI (79 aa)). One can recognise a UVR domain in the interval 228–263 (TELQQRLVAEMEQASQELNYERAASIRDRIRGFASI).

Belongs to the UvrC family. As to quaternary structure, interacts with UvrB in an incision complex.

The protein resides in the cytoplasm. The UvrABC repair system catalyzes the recognition and processing of DNA lesions. UvrC both incises the 5' and 3' sides of the lesion. The N-terminal half is responsible for the 3' incision and the C-terminal half is responsible for the 5' incision. The sequence is that of UvrABC system protein C from Gluconobacter oxydans (strain 621H) (Gluconobacter suboxydans).